The chain runs to 256 residues: Geranylgeranylglyceryl phosphate synthase (256 aa).

Mg(2+)-binding residues include D28 and S53. Residues 172 to 178 (YLEAGSG), 203 to 204 (GG), and 225 to 226 (GT) contribute to the sn-glycerol 1-phosphate site.

Belongs to the GGGP/HepGP synthase family. Group II subfamily. Mg(2+) serves as cofactor.

Its subcellular location is the cytoplasm. The enzyme catalyses sn-glycerol 1-phosphate + (2E,6E,10E)-geranylgeranyl diphosphate = sn-3-O-(geranylgeranyl)glycerol 1-phosphate + diphosphate. The protein operates within membrane lipid metabolism; glycerophospholipid metabolism. Its function is as follows. Prenyltransferase that catalyzes the transfer of the geranylgeranyl moiety of geranylgeranyl diphosphate (GGPP) to the C3 hydroxyl of sn-glycerol-1-phosphate (G1P). This reaction is the first ether-bond-formation step in the biosynthesis of archaeal membrane lipids. In Methanococcus maripaludis (strain DSM 14266 / JCM 13030 / NBRC 101832 / S2 / LL), this protein is Geranylgeranylglyceryl phosphate synthase.